We begin with the raw amino-acid sequence, 217 residues long: Ribose-5-phosphate isomerase A (217 aa).

Substrate contacts are provided by residues 28-31 (TGST), 81-84 (DGAD), and 94-97 (KGGG). E103 serves as the catalytic Proton acceptor. Residue K121 participates in substrate binding.

This sequence belongs to the ribose 5-phosphate isomerase family. In terms of assembly, homodimer.

The enzyme catalyses aldehydo-D-ribose 5-phosphate = D-ribulose 5-phosphate. It participates in carbohydrate degradation; pentose phosphate pathway; D-ribose 5-phosphate from D-ribulose 5-phosphate (non-oxidative stage): step 1/1. Functionally, catalyzes the reversible conversion of ribose-5-phosphate to ribulose 5-phosphate. In Aeromonas hydrophila subsp. hydrophila (strain ATCC 7966 / DSM 30187 / BCRC 13018 / CCUG 14551 / JCM 1027 / KCTC 2358 / NCIMB 9240 / NCTC 8049), this protein is Ribose-5-phosphate isomerase A.